We begin with the raw amino-acid sequence, 122 residues long: Ribosome-binding factor A (122 aa).

This sequence belongs to the RbfA family. As to quaternary structure, monomer. Binds 30S ribosomal subunits, but not 50S ribosomal subunits or 70S ribosomes.

Its subcellular location is the cytoplasm. Functionally, one of several proteins that assist in the late maturation steps of the functional core of the 30S ribosomal subunit. Associates with free 30S ribosomal subunits (but not with 30S subunits that are part of 70S ribosomes or polysomes). Required for efficient processing of 16S rRNA. May interact with the 5'-terminal helix region of 16S rRNA. This chain is Ribosome-binding factor A, found in Caldanaerobacter subterraneus subsp. tengcongensis (strain DSM 15242 / JCM 11007 / NBRC 100824 / MB4) (Thermoanaerobacter tengcongensis).